A 377-amino-acid polypeptide reads, in one-letter code: 3-dehydroquinate synthase (377 aa).

NAD(+)-binding positions include 115 to 119 (GVIGD), 139 to 140 (TS), Lys152, and Lys162. Zn(2+) contacts are provided by Glu195, His257, and His276.

Belongs to the sugar phosphate cyclases superfamily. Dehydroquinate synthase family. Requires Co(2+) as cofactor. Zn(2+) is required as a cofactor. NAD(+) serves as cofactor.

It localises to the cytoplasm. The catalysed reaction is 7-phospho-2-dehydro-3-deoxy-D-arabino-heptonate = 3-dehydroquinate + phosphate. Its pathway is metabolic intermediate biosynthesis; chorismate biosynthesis; chorismate from D-erythrose 4-phosphate and phosphoenolpyruvate: step 2/7. Its function is as follows. Catalyzes the conversion of 3-deoxy-D-arabino-heptulosonate 7-phosphate (DAHP) to dehydroquinate (DHQ). This is 3-dehydroquinate synthase from Rhizobium etli (strain ATCC 51251 / DSM 11541 / JCM 21823 / NBRC 15573 / CFN 42).